We begin with the raw amino-acid sequence, 210 residues long: T-cell surface glycoprotein CD8 beta chain (210 aa).

The signal sequence occupies residues 1 to 21 (MRPRLWLLLAAQLTVLHGNSV). Positions 22-132 (LQQTPAYIKV…ELTFGKGTQL (111 aa)) constitute an Ig-like V-type domain. Over 22-170 (LQQTPAYIKV…ETQKGPLCSP (149 aa)) the chain is Extracellular. Residues Cys41 and Cys116 are joined by a disulfide bond. Asn102 carries N-linked (GlcNAc...) asparagine glycosylation. A helical transmembrane segment spans residues 171–191 (ITLGLLVAGVLVLLVSLGVAI). The Cytoplasmic segment spans residues 192 to 210 (HLCCRRRRARLRFMKQFYK). Residue Tyr209 is modified to Phosphotyrosine.

Forms disulfide-linked heterodimers with CD8A at the cell surface. Interacts with CD3D; this interaction couples TCR-CD3 with CD8. Interacts with LCK. Phosphorylated as a consequence of T-cell activation. In terms of processing, palmitoylated at the cytoplasmic tail and thereby targets the heterodimer CD8A/CD8B to lipid rafts unlike CD8A homodimers. In terms of tissue distribution, isoform 1, isoform 3, isoform 5, isoform 6, isoform 7 and isoform 8 are expressed in both thymus and peripheral CD8+ T-cells. Expression of isoform 1 is higher in thymus CD8+ T-cells than in peripheral CD8+ T-cells. Expression of isoform 6 is higher in peripheral CD8+ T-cells than in thymus CD8+ T-cells.

The protein localises to the cell membrane. Its subcellular location is the secreted. Functionally, integral membrane glycoprotein that plays an essential role in the immune response and serves multiple functions in responses against both external and internal offenses. In T-cells, functions primarily as a coreceptor for MHC class I molecule:peptide complex. The antigens presented by class I peptides are derived from cytosolic proteins while class II derived from extracellular proteins. Interacts simultaneously with the T-cell receptor (TCR) and the MHC class I proteins presented by antigen presenting cells (APCs). In turn, recruits the Src kinase LCK to the vicinity of the TCR-CD3 complex. A palmitoylation site in the cytoplasmic tail of CD8B chain contributes to partitioning of CD8 into the plasma membrane lipid rafts where signaling proteins are enriched. Once LCK recruited, it initiates different intracellular signaling pathways by phosphorylating various substrates ultimately leading to lymphokine production, motility, adhesion and activation of cytotoxic T-lymphocytes (CTLs). Additionally, plays a critical role in thymic selection of CD8+ T-cells. The sequence is that of T-cell surface glycoprotein CD8 beta chain (CD8B) from Homo sapiens (Human).